Here is a 167-residue protein sequence, read N- to C-terminus: UPF0225 protein VV1_2912 (167 aa).

It belongs to the UPF0225 family.

This chain is UPF0225 protein VV1_2912, found in Vibrio vulnificus (strain CMCP6).